The following is a 152-amino-acid chain: Glutamyl-tRNA(Gln) amidotransferase subunit F, mitochondrial (152 aa).

The protein belongs to the GatF family. In terms of assembly, subunit of the heterotrimeric GatFAB amidotransferase (AdT) complex, composed of A, B and F subunits.

It localises to the mitochondrion inner membrane. It catalyses the reaction L-glutamyl-tRNA(Gln) + L-glutamine + ATP + H2O = L-glutaminyl-tRNA(Gln) + L-glutamate + ADP + phosphate + H(+). Its function is as follows. Allows the formation of correctly charged Gln-tRNA(Gln) through the transamidation of misacylated Glu-tRNA(Gln) in the mitochondria. The reaction takes place in the presence of glutamine and ATP through an activated gamma-phospho-Glu-tRNA(Gln). Required for proper protein synthesis within the mitochondrion. The polypeptide is Glutamyl-tRNA(Gln) amidotransferase subunit F, mitochondrial (Komagataella phaffii (strain GS115 / ATCC 20864) (Yeast)).